We begin with the raw amino-acid sequence, 595 residues long: UvrABC system protein C (595 aa).

One can recognise a GIY-YIG domain in the interval 14-91 (SNPGCYLHKD…IQENMPKFNI (78 aa)). The UVR domain occupies 196–231 (DKIVNQLKAKMKDMSDQMAFERAAEYRDLIEAVSTL).

This sequence belongs to the UvrC family. Interacts with UvrB in an incision complex.

The protein localises to the cytoplasm. The UvrABC repair system catalyzes the recognition and processing of DNA lesions. UvrC both incises the 5' and 3' sides of the lesion. The N-terminal half is responsible for the 3' incision and the C-terminal half is responsible for the 5' incision. The chain is UvrABC system protein C from Streptococcus thermophilus (strain ATCC BAA-491 / LMD-9).